A 416-amino-acid polypeptide reads, in one-letter code: Kelch repeat-containing protein At1g19460 (416 aa).

The segment covering 1–11 has biased composition (polar residues); it reads MANISEISGDS. The interval 1–55 is disordered; sequence MANISEISGDSNDGGDPNKKPEEQVLRRSRRIATRNENQNKKPKEEEEKDNRSVS. Basic and acidic residues-rich tracts occupy residues 16–26 and 38–52; these read DPNKKPEEQVL and NQNK…KDNR. Kelch repeat units follow at residues 156–202, 203–250, 255–293, and 294–344; these read EMYV…VFDG, KIYV…FAHA, KLYI…PCTM, and QCVI…SDGS.

In Arabidopsis thaliana (Mouse-ear cress), this protein is Kelch repeat-containing protein At1g19460.